The sequence spans 303 residues: Elongation factor Ts (303 aa).

Residues 80-83 are involved in Mg(2+) ion dislocation from EF-Tu; that stretch reads TDFV.

The protein belongs to the EF-Ts family.

The protein resides in the cytoplasm. Functionally, associates with the EF-Tu.GDP complex and induces the exchange of GDP to GTP. It remains bound to the aminoacyl-tRNA.EF-Tu.GTP complex up to the GTP hydrolysis stage on the ribosome. In Clostridium botulinum (strain Eklund 17B / Type B), this protein is Elongation factor Ts.